The chain runs to 705 residues: FAD-dependent monooxygenase ATEG_03635 (705 aa).

Residues 86–115 (DVLICGAGPFGLELGLILARQGISFRIVDK), Val-208, 308–310 (RFY), and Ser-408 contribute to the FAD site.

The protein belongs to the PheA/TfdB FAD monooxygenase family. FAD is required as a cofactor.

It functions in the pathway secondary metabolite biosynthesis. Functionally, FAD-dependent monooxygenase; part of the cluster A that mediates the biosynthesis of azasperpyranones, members of the azaphilone family that exhibit anti-cancer activities. Azasperpyranones are synthesized by 2 clusters, A and B. Cluster A is responsible for the production of the polyhydric phenol moiety while the azaphilonoid scaffold is produced by the cluster B. The non-reducing polyketide synthase ATEG_03629 produces 5-methyl orsellinic acid, which is then reduced to 5-methyl orsellinic aldehyde by the NRPS-like protein ATEG_03630. 5-methyl orsellinic aldehyde is then first hydroxylated by the FAD-dependent monooxygenase ATEG_03635 and subsequently hydroxylated by the cytochrome P450 monooxygenase ATEG_03631 to produce the unstable polyhydric phenol precursor of azasperpyranones. On the other hand, the polyketide synthase ATEG_07659 is responsible for producing the 3,5-dimethyloctadienone moiety from acetyl-CoA, three malonyl-CoA, and two S-adenosyl methionines (SAM). The 3,5-dimethyloctadienone moiety is then loaded onto the SAT domain of ATEG_07661 and extended with four malonyl-CoA and one SAM, which leads to the formation of 2,4-dihydroxy-6-(5,7-dimethyl-2-oxo-trans-3-trans-5-nonadienyl)-3-methylbenzaldehyde (compound 8) after reductive release and aldol condensation. The FAD-dependent monooxygenase ATEG_07662 is the next enzyme in the biosynthesis sequence and hydroxylates the side chain at the benzylic position of compound 8. In Aspergillus nidulans, afoF, the ortholog of the FAD-dependent oxygenase ATEG_07660, is the key enzyme for the biosynthesis of asperfuranone by catalyzing the hydroxylation at C-8 of to prevent the formation of a six-membered ring hemiacetal intermediate and thus facilitating the formation of a five-membered ring to produce asperfuranone. In Aspergillus terreus, ATEG_07660 is probably not functional, which leads to the formation of the six-membered ring hemiacetal intermediate presperpyranone instead of asperfuranone. Finally, ATEG_03636 is involved in the condensation of the polyhydric phenol moiety produced by cluster A and the perasperpyranone precursor produced by cluster B, to yield azasperpyranone A. Further modifications of azasperpyranone A result in the production of derivatives, including azasperpyranone B to F. This Aspergillus terreus (strain NIH 2624 / FGSC A1156) protein is FAD-dependent monooxygenase ATEG_03635.